The primary structure comprises 238 residues: Adenylate dimethylallyltransferase (238 aa).

This sequence belongs to the isopentenyl transferase family.

It carries out the reaction dimethylallyl diphosphate + AMP = N(6)-(dimethylallyl)adenosine 5'-phosphate + diphosphate. Its function is as follows. Transfers dimethylallyl groups to AMP as part of the biosynthesis of cytokinin phytohormones. The polypeptide is Adenylate dimethylallyltransferase (tzs) (Ralstonia nicotianae (strain ATCC BAA-1114 / GMI1000) (Ralstonia solanacearum)).